Reading from the N-terminus, the 161-residue chain is Small ribosomal subunit protein uS9 (161 aa).

2 disordered regions span residues 1 to 27 and 142 to 161; these read MAQISDSLDVAPESFSTETPNEEAPKA and KERKKAGLKKARKAPQFSKR.

It belongs to the universal ribosomal protein uS9 family.

The chain is Small ribosomal subunit protein uS9 from Clavibacter michiganensis subsp. michiganensis (strain NCPPB 382).